Here is a 93-residue protein sequence, read N- to C-terminus: UPF0358 protein OB1428 (93 aa).

The protein belongs to the UPF0358 family.

The sequence is that of UPF0358 protein OB1428 from Oceanobacillus iheyensis (strain DSM 14371 / CIP 107618 / JCM 11309 / KCTC 3954 / HTE831).